A 256-amino-acid chain; its full sequence is Thiazole synthase (256 aa).

K95 functions as the Schiff-base intermediate with DXP in the catalytic mechanism. 1-deoxy-D-xylulose 5-phosphate is bound by residues G156, 182 to 183, and 204 to 205; these read AG and NT.

It belongs to the ThiG family. In terms of assembly, homotetramer. Forms heterodimers with either ThiH or ThiS.

The protein resides in the cytoplasm. It carries out the reaction [ThiS sulfur-carrier protein]-C-terminal-Gly-aminoethanethioate + 2-iminoacetate + 1-deoxy-D-xylulose 5-phosphate = [ThiS sulfur-carrier protein]-C-terminal Gly-Gly + 2-[(2R,5Z)-2-carboxy-4-methylthiazol-5(2H)-ylidene]ethyl phosphate + 2 H2O + H(+). The protein operates within cofactor biosynthesis; thiamine diphosphate biosynthesis. Its function is as follows. Catalyzes the rearrangement of 1-deoxy-D-xylulose 5-phosphate (DXP) to produce the thiazole phosphate moiety of thiamine. Sulfur is provided by the thiocarboxylate moiety of the carrier protein ThiS. In vitro, sulfur can be provided by H(2)S. The polypeptide is Thiazole synthase (Citrobacter koseri (strain ATCC BAA-895 / CDC 4225-83 / SGSC4696)).